The sequence spans 772 residues: General transcription and DNA repair factor IIH helicase subunit XPD (772 aa).

The 277-residue stretch at 7–283 (DLPILFPYPR…QSDSKKLQDE (277 aa)) folds into the Helicase ATP-binding domain. 42–49 (MPSGTGKT) serves as a coordination point for ATP. The [4Fe-4S] cluster site is built by C115, C133, C154, and C189. The short motif at 233 to 236 (DEAH) is the DEAH box element.

The protein belongs to the helicase family. RAD3/XPD subfamily. As to quaternary structure, component of the 7-subunit TFIIH core complex composed of XPB/ptr8, XPD/rad15, ssl1, tfb1, tfb2, tfb4 and tfb5, which is active in NER. The core complex associates with the 3-subunit CTD-kinase module TFIIK composed of mcs2/cyclin H, mcs6/cdk7 and pmh1/tfb3 to form the 10-subunit holoenzyme (holo-TFIIH) active in transcription. Requires [4Fe-4S] cluster as cofactor.

Its subcellular location is the nucleus. It carries out the reaction Couples ATP hydrolysis with the unwinding of duplex DNA at the replication fork by translocating in the 5'-3' direction. This creates two antiparallel DNA single strands (ssDNA). The leading ssDNA polymer is the template for DNA polymerase III holoenzyme which synthesizes a continuous strand.. It catalyses the reaction ATP + H2O = ADP + phosphate + H(+). In terms of biological role, ATP-dependent 5'-3' DNA helicase, component of the general transcription and DNA repair factor IIH (TFIIH) core complex, which is involved in general and transcription-coupled nucleotide excision repair (NER) of damaged DNA and, when complexed to TFIIK, in RNA transcription by RNA polymerase II. In NER, TFIIH acts by opening DNA around the lesion to allow the excision of the damaged oligonucleotide and its replacement by a new DNA fragment. The ATP-dependent helicase activity of XPD/rad15 is required for DNA opening. In transcription, TFIIH has an essential role in transcription initiation. When the pre-initiation complex (PIC) has been established, TFIIH is required for promoter opening and promoter escape. Phosphorylation of the C-terminal tail (CTD) of the largest subunit of RNA polymerase II by the kinase module TFIIK controls the initiation of transcription. XPD/rad15 acts by forming a bridge between TFIIK and the core-TFIIH complex. Involved in the maintenance of the fidelity of DNA replication. The chain is General transcription and DNA repair factor IIH helicase subunit XPD from Schizosaccharomyces pombe (strain 972 / ATCC 24843) (Fission yeast).